Reading from the N-terminus, the 247-residue chain is MSEQSQLDDSTIDKLIPQIFNEMRSNLNNTTNKFPKSTGGGASDNISANSNSIRSFNSITTQSLLKESESLDKITAMIKNVTAALKNNLPVYVNQVHEVCKSTNSILDSWINIHSQAGYIHKLMSDQTYLKLINDRLHNENVNTNDEDGSTLHNVIALKKKEILDLRQKLENRKGEKDAAPAKPPNQGLNPRYGVQSGRRPVPSAGISNNGRVRKTHVPASKRPSGIPRVTNRWTKPTASSSRKMFR.

S2 bears the N-acetylserine mark. Disordered regions lie at residues 27 to 47 and 172 to 247; these read LNNT…DNIS and NRKG…KMFR. Residues 152-180 are a coiled coil; it reads LHNVIALKKKEILDLRQKLENRKGEKDAA. The span at 232–247 shows a compositional bias: polar residues; it reads NRWTKPTASSSRKMFR.

Belongs to the DASH complex DUO1 family. In terms of assembly, component of the DASH complex consisting of ASK1, DAD1, DAD2, DAD3, DAD4, DAM1, DUO1, HSK3, SPC19 and SPC34, with a stoichiometry of one copy of each subunit per complex. Multiple DASH complexes oligomerize to form a ring that encircles spindle microtubules and organizes the rod-like NDC80 complexes of the outer kinetochore. DASH complex oligomerization strengthens microtubule attachments. On cytoplasmic microtubules, DASH complexes appear to form patches instead of rings. Within the complex, DAM1 and DUO1 may form the microtubule connections.

It is found in the nucleus. The protein localises to the cytoplasm. The protein resides in the cytoskeleton. Its subcellular location is the spindle pole. It localises to the chromosome. It is found in the centromere. The protein localises to the kinetochore. In terms of biological role, component of the DASH complex that connects microtubules with kinetochores and couples microtubule depolymerisation to chromosome movement; it is involved in retrieving kinetochores to the spindle poles before their re-orientation on the spindle in early mitosis and allows microtubule depolymerization to pull chromosomes apart and resist detachment during anaphase. Kinetochores, consisting of a centromere-associated inner segment and a microtubule-contacting outer segment, play a crucial role in chromosome segregation by mediating the physical connection between centromeric DNA and microtubules. Kinetochores also serve as an input point for the spindle assembly checkpoint, which delays anaphase until all chromosomes have bioriented on the mitotic spindle. During spindle-kinetochore attachment, kinetochores first attach to the lateral surface of spindle microtubules, which supports the congression of chromosomes toward the middle of the dividing cell; they then slide along towards the spindle pole, a process independent of the DASH complex but requiring the NDC80 complex. When the end of a disassembling microtubule reaches the laterally attached kinetochore, the DASH complex together with the NDC80 complex and STU2 convert lateral attachment to end-on capture to produce a structure that can track with microtubule shortening and sustain attachment when tension is applied across sister kinetochores upon their biorientation. Microtubule depolymerization proceeds by protofilament splaying and induces the kinetochore-attached DASH complex to slide longitudinally, thereby helping to transduce depolymerization energy into pulling forces to disjoin chromatids. Incorrect microtubule attachments are corrected by releasing microubules from the kinetochore through phosphorylation by IPL1 of kinetochore components. Links the microtubule cytoskeleton to chromosomes during interphase. Also contributes to the poleward transport of kinetochores on microtubules following centromeric DNA replication in S-phase. The chain is DASH complex subunit DUO1 (DUO1) from Saccharomyces cerevisiae (strain ATCC 204508 / S288c) (Baker's yeast).